Here is a 49-residue protein sequence, read N- to C-terminus: Delta-actitoxin-Axm1a (49 aa).

3 disulfides stabilise this stretch: Cys4–Cys46, Cys6–Cys36, and Cys29–Cys47.

This sequence belongs to the sea anemone sodium channel inhibitory toxin family. Type I subfamily.

The protein localises to the secreted. It localises to the nematocyst. Functionally, binds specifically to voltage-gated sodium channels (Nav) (site 3), thereby delaying their inactivation. This toxin retains the greatest capacity to discriminate between the cardiac (Nav1.5/SCN5A) and neuronal sodium channels (2.5 nM versus 120 nM, when electrophysiologically tested and 14 nM versus 400 nM, when tested by ion flux), whereas its paralog Anthopleurin-B has the highest affinity of all anemone toxins for the mammalian sodium channel. Its ability to differentiate between cardiac and skeletal channels appears to be associated with domain 4 of the channel. This toxin does not slow or inhibit closed-state inactivation of cardiac sodium channels, but selectively modifies inactivation from the open-state. It does not display phospholipid-binding activities, suggesting that the domain IV S3-S4 linker is located at the extracellular surface and not buried in the phospholipid bilayer. This Anthopleura xanthogrammica (Giant green sea anemone) protein is Delta-actitoxin-Axm1a.